A 292-amino-acid chain; its full sequence is Ribosomal protein L11 methyltransferase (292 aa).

Positions 143, 164, 186, and 227 each coordinate S-adenosyl-L-methionine.

It belongs to the methyltransferase superfamily. PrmA family.

Its subcellular location is the cytoplasm. The catalysed reaction is L-lysyl-[protein] + 3 S-adenosyl-L-methionine = N(6),N(6),N(6)-trimethyl-L-lysyl-[protein] + 3 S-adenosyl-L-homocysteine + 3 H(+). Methylates ribosomal protein L11. The protein is Ribosomal protein L11 methyltransferase of Hahella chejuensis (strain KCTC 2396).